The sequence spans 196 residues: Nitrogen regulatory protein P-II homolog (196 aa).

The transit peptide at 1–61 (MAASMTKPIS…NNSRVLPVVS (61 aa)) directs the protein to the chloroplast. Residues 108-112 (GFGAQ) and 161-164 (GDGK) contribute to the ATP site. Mg(2+) is bound at residue Gly110.

Belongs to the P(II) protein family. Homodimer. Interacts with NAGK. Interaction with NAGK is dependent of MgATP and inhibited by 2-oxoglutarate, arginine, glutamate, citrate, and oxaloacetate.

It is found in the plastid. The protein localises to the chloroplast. Participates in sensing carbon and organic nitrogen status and regulates some steps of primary carbon and nitrogen metabolism. Required for nitrite uptake in chloroplasts and regulates arginine biosynthesis through interaction with acetylglutamate kinase (NAGK) in chloroplasts. Regulates fatty acids synthesis in chloroplasts by interacting with the acetyl-CoA carboxylase complex and inhibiting acetyl-CoA carboxylase (ACCase) activity. The sequence is that of Nitrogen regulatory protein P-II homolog (GLB1) from Arabidopsis thaliana (Mouse-ear cress).